The following is a 292-amino-acid chain: Protein PHR1-LIKE 3 (292 aa).

The region spanning 34–94 (TDPKPRLRWT…HLQKFRLGRQ (61 aa)) is the HTH myb-type domain. The segment at residues 65 to 90 (PKTIMRTMGVKGLTLYHLKSHLQKFR) is a DNA-binding region (H-T-H motif). Positions 137-157 (TEALRAQMEVQRRLHEQLEVQ) form a coiled coil. The LHEQLE signature appears at 150 to 155 (LHEQLE).

The protein belongs to the MYB-CC family. Homo- and heterodimers. Interacts with PHL2, but not with PHR1.

It is found in the nucleus. Its function is as follows. Transcriptional activator. Probable component of the central regulatory system controlling transcriptional responses to Pi starvation. Binds in a sequence-specific manner to phosphate starvation-regulated promoters. Required for female gametophyte development and function. The polypeptide is Protein PHR1-LIKE 3 (Arabidopsis thaliana (Mouse-ear cress)).